The chain runs to 229 residues: RNA pyrophosphohydrolase (229 aa).

The Nudix hydrolase domain occupies Gly-6–Thr-149. The Nudix box motif lies at Gly-38 to Gly-59. Residues Ser-168–Ala-229 form a disordered region.

This sequence belongs to the Nudix hydrolase family. RppH subfamily. It depends on a divalent metal cation as a cofactor.

Functionally, accelerates the degradation of transcripts by removing pyrophosphate from the 5'-end of triphosphorylated RNA, leading to a more labile monophosphorylated state that can stimulate subsequent ribonuclease cleavage. In Delftia acidovorans (strain DSM 14801 / SPH-1), this protein is RNA pyrophosphohydrolase.